The primary structure comprises 295 residues: Nucleotide-binding protein RBAM_031990 (295 aa).

16 to 23 (GMSGAGKT) contacts ATP. 67–70 (DLRG) provides a ligand contact to GTP.

Belongs to the RapZ-like family.

Displays ATPase and GTPase activities. The polypeptide is Nucleotide-binding protein RBAM_031990 (Bacillus velezensis (strain DSM 23117 / BGSC 10A6 / LMG 26770 / FZB42) (Bacillus amyloliquefaciens subsp. plantarum)).